The primary structure comprises 443 residues: Xaa-Pro dipeptidase (443 aa).

Residues D244, D255, H336, E381, and E420 each contribute to the Mn(2+) site.

This sequence belongs to the peptidase M24B family. Bacterial-type prolidase subfamily. Mn(2+) is required as a cofactor.

The catalysed reaction is Xaa-L-Pro dipeptide + H2O = an L-alpha-amino acid + L-proline. In terms of biological role, splits dipeptides with a prolyl residue in the C-terminal position. This chain is Xaa-Pro dipeptidase, found in Stenotrophomonas maltophilia (strain K279a).